A 362-amino-acid chain; its full sequence is Peptide chain release factor 1 (362 aa).

Q235 carries the N5-methylglutamine modification.

The protein belongs to the prokaryotic/mitochondrial release factor family. In terms of processing, methylated by PrmC. Methylation increases the termination efficiency of RF1.

It is found in the cytoplasm. Functionally, peptide chain release factor 1 directs the termination of translation in response to the peptide chain termination codons UAG and UAA. The protein is Peptide chain release factor 1 of Acinetobacter baumannii (strain ACICU).